Here is a 212-residue protein sequence, read N- to C-terminus: Ribonuclease HII (212 aa).

Residues isoleucine 22 to leucine 212 form the RNase H type-2 domain. Residues aspartate 28, glutamate 29, and aspartate 123 each contribute to the a divalent metal cation site.

It belongs to the RNase HII family. It depends on Mn(2+) as a cofactor. Requires Mg(2+) as cofactor.

It localises to the cytoplasm. It carries out the reaction Endonucleolytic cleavage to 5'-phosphomonoester.. Its function is as follows. Endonuclease that specifically degrades the RNA of RNA-DNA hybrids. This chain is Ribonuclease HII, found in Dehalococcoides mccartyi (strain ATCC BAA-2100 / JCM 16839 / KCTC 5957 / BAV1).